We begin with the raw amino-acid sequence, 460 residues long: UDP-N-acetylmuramoylalanine--D-glutamate ligase (460 aa).

ATP is bound at residue 115–121 (GTNGKTT).

This sequence belongs to the MurCDEF family.

It localises to the cytoplasm. The enzyme catalyses UDP-N-acetyl-alpha-D-muramoyl-L-alanine + D-glutamate + ATP = UDP-N-acetyl-alpha-D-muramoyl-L-alanyl-D-glutamate + ADP + phosphate + H(+). Its pathway is cell wall biogenesis; peptidoglycan biosynthesis. Its function is as follows. Cell wall formation. Catalyzes the addition of glutamate to the nucleotide precursor UDP-N-acetylmuramoyl-L-alanine (UMA). The sequence is that of UDP-N-acetylmuramoylalanine--D-glutamate ligase from Salinibacter ruber (strain DSM 13855 / M31).